A 173-amino-acid chain; its full sequence is RNA pyrophosphohydrolase (173 aa).

The 144-residue stretch at 6 to 149 folds into the Nudix hydrolase domain; that stretch reads GFRANVGIII…KRDVYRKVMK (144 aa). The Nudix box signature appears at 38-59; sequence GGVDDGESAEEAMYRELYEEVG.

Belongs to the Nudix hydrolase family. RppH subfamily. The cofactor is a divalent metal cation.

In terms of biological role, accelerates the degradation of transcripts by removing pyrophosphate from the 5'-end of triphosphorylated RNA, leading to a more labile monophosphorylated state that can stimulate subsequent ribonuclease cleavage. The sequence is that of RNA pyrophosphohydrolase from Shewanella pealeana (strain ATCC 700345 / ANG-SQ1).